The chain runs to 45 residues: Iota-conotoxin-like R11.13 (45 aa).

4 disulfide bridges follow: cysteine 5-cysteine 19, cysteine 12-cysteine 22, cysteine 18-cysteine 27, and cysteine 21-cysteine 36. Leucine 43 is subject to D-leucine. Arginine 45 is a propeptide (removed by a carboxypeptidase).

The protein belongs to the conotoxin I1 superfamily. As to expression, expressed by the venom duct.

The protein resides in the secreted. Iota-conotoxins bind to voltage-gated sodium channels (Nav) and act as agonists by shifting the voltage-dependence of activation to more hyperpolarized levels. Produces general excitatory symptoms. This chain is Iota-conotoxin-like R11.13, found in Conus radiatus (Rayed cone).